Reading from the N-terminus, the 320-residue chain is uncharacterized protein (320 aa).

This is an uncharacterized protein from Bacillus subtilis (strain 168).